We begin with the raw amino-acid sequence, 148 residues long: DDCCSAADRHEVLDNWKGIWSAEFTGRRVAIGQAIFQELFALDPNAKGVFGRVNVDKPSEADWKAHVIRVINGLDLAVNLLEDPKALQEELKHLARQHRERSGVKAVYFDEMEKALLKVLPQVSSHFNSGAWDRCFTRIADVIKAELP.

The region spanning 3–148 (CCSAADRHEV…IADVIKAELP (146 aa)) is the Globin domain. A disulfide bridge connects residues cysteine 4 and cysteine 135. Heme b is bound at residue histidine 98.

The protein belongs to the globin family. In terms of assembly, disulfide bonded trimer of chains IIA, IIB, and IIC.

It localises to the secreted. This is Extracellular globin-2B from Tylorrhynchus heterochetus (Japanese palolo worm).